The following is a 206-amino-acid chain: Guanylate kinase (206 aa).

Residues 4-182 (ANLFIISAPS…AVQNLIHIIS (179 aa)) form the Guanylate kinase-like domain. An ATP-binding site is contributed by 11–18 (APSGAGKT).

This sequence belongs to the guanylate kinase family.

The protein resides in the cytoplasm. The enzyme catalyses GMP + ATP = GDP + ADP. Essential for recycling GMP and indirectly, cGMP. The chain is Guanylate kinase from Coxiella burnetii (strain RSA 493 / Nine Mile phase I).